Reading from the N-terminus, the 85-residue chain is Putative membrane protein insertion efficiency factor (85 aa).

Belongs to the UPF0161 family.

The protein resides in the cell membrane. Functionally, could be involved in insertion of integral membrane proteins into the membrane. Its function is as follows. Lyses fish blood cells. The chain is Putative membrane protein insertion efficiency factor (hlyA) from Aeromonas hydrophila.